The primary structure comprises 600 residues: Elongation factor 4 (600 aa).

A tr-type G domain is found at 4 to 187 (KYIRNFSIVA…AIIEQIPPPL (184 aa)). GTP-binding positions include 16-21 (DHGKST) and 134-137 (NKID).

Belongs to the TRAFAC class translation factor GTPase superfamily. Classic translation factor GTPase family. LepA subfamily.

The protein localises to the cell membrane. The enzyme catalyses GTP + H2O = GDP + phosphate + H(+). Required for accurate and efficient protein synthesis under certain stress conditions. May act as a fidelity factor of the translation reaction, by catalyzing a one-codon backward translocation of tRNAs on improperly translocated ribosomes. Back-translocation proceeds from a post-translocation (POST) complex to a pre-translocation (PRE) complex, thus giving elongation factor G a second chance to translocate the tRNAs correctly. Binds to ribosomes in a GTP-dependent manner. The polypeptide is Elongation factor 4 (Malacoplasma penetrans (strain HF-2) (Mycoplasma penetrans)).